We begin with the raw amino-acid sequence, 347 residues long: NADH-quinone oxidoreductase subunit H (347 aa).

Transmembrane regions (helical) follow at residues 22-42 (GVVSIKVIALIICLLLATAYL), 59-79 (PSLAGPFGLLQPIADAVKLVF), 93-113 (FIIAPIITFVLSLLGWSVIPI), 124-144 (IGGILFILAVTSLGVYGIIIA), 171-191 (MALSIVAVLIVTGEMDLIQIV), 198-218 (PIWLTIMMLPLAVIYFISILA), 240-260 (VEYSSMAFAMFFLGEYANMIL), 285-305 (IPGYIWFILKVSMVLFCFLWI), and 321-341 (GLKVFLPIVLAWIIVVSAILV).

Belongs to the complex I subunit 1 family. NDH-1 is composed of 14 different subunits. Subunits NuoA, H, J, K, L, M, N constitute the membrane sector of the complex.

It localises to the cell inner membrane. The catalysed reaction is a quinone + NADH + 5 H(+)(in) = a quinol + NAD(+) + 4 H(+)(out). In terms of biological role, NDH-1 shuttles electrons from NADH, via FMN and iron-sulfur (Fe-S) centers, to quinones in the respiratory chain. The immediate electron acceptor for the enzyme in this species is believed to be ubiquinone. Couples the redox reaction to proton translocation (for every two electrons transferred, four hydrogen ions are translocated across the cytoplasmic membrane), and thus conserves the redox energy in a proton gradient. This subunit may bind ubiquinone. The protein is NADH-quinone oxidoreductase subunit H of Orientia tsutsugamushi (strain Ikeda) (Rickettsia tsutsugamushi).